A 445-amino-acid polypeptide reads, in one-letter code: Adenylosuccinate synthetase (445 aa).

GTP-binding positions include 24–30 (GDEGKGK) and 52–54 (GHT). Asp25 acts as the Proton acceptor in catalysis. Positions 25 and 52 each coordinate Mg(2+). Residues 25–28 (DEGK), 50–53 (NAGH), Thr147, Arg161, Asn238, Thr253, and Arg317 each bind IMP. His53 functions as the Proton donor in the catalytic mechanism. 313-319 (TTTGRRR) contacts substrate. GTP contacts are provided by residues Arg319, 345-347 (KLD), and 427-429 (GVG).

Belongs to the adenylosuccinate synthetase family. Homodimer. It depends on Mg(2+) as a cofactor.

Its subcellular location is the cytoplasm. It carries out the reaction IMP + L-aspartate + GTP = N(6)-(1,2-dicarboxyethyl)-AMP + GDP + phosphate + 2 H(+). Its pathway is purine metabolism; AMP biosynthesis via de novo pathway; AMP from IMP: step 1/2. Functionally, plays an important role in the de novo pathway and in the salvage pathway of purine nucleotide biosynthesis. Catalyzes the first committed step in the biosynthesis of AMP from IMP. This is Adenylosuccinate synthetase from Malassezia globosa (strain ATCC MYA-4612 / CBS 7966) (Dandruff-associated fungus).